We begin with the raw amino-acid sequence, 315 residues long: Leukocidin-S subunit (315 aa).

A signal peptide spans 1-29; that stretch reads MLKNKILATTLSVSLLAPLANPLLENAKA.

This sequence belongs to the aerolysin family. In terms of assembly, leukocidin consists of two protein components: F and S.

Its function is as follows. Leukocidin causes cytotoxic changes in polymorphonuclear leukocytes. This is Leukocidin-S subunit (lukS) from Staphylococcus aureus.